The following is a 316-amino-acid chain: Protoheme IX farnesyltransferase (316 aa).

The tract at residues 1–21 (MAKSQALGNAPLTSTVAENAT) is disordered. The segment covering 11–21 (PLTSTVAENAT) has biased composition (polar residues). The next 9 membrane-spanning stretches (helical) occupy residues 42–62 (VVAM…PGIP), 67–87 (VILG…FNHV), 115–135 (VVFA…LNAL), 136–156 (TAWL…VWLK), 163–183 (IVIG…AVTG), 189–209 (ALLL…ALAI), 235–255 (MVLL…LTGM), 256–276 (SGGV…GYAL), and 295–315 (IWHL…TSLM).

This sequence belongs to the UbiA prenyltransferase family. Protoheme IX farnesyltransferase subfamily.

The protein resides in the cell inner membrane. The catalysed reaction is heme b + (2E,6E)-farnesyl diphosphate + H2O = Fe(II)-heme o + diphosphate. Its pathway is porphyrin-containing compound metabolism; heme O biosynthesis; heme O from protoheme: step 1/1. Functionally, converts heme B (protoheme IX) to heme O by substitution of the vinyl group on carbon 2 of heme B porphyrin ring with a hydroxyethyl farnesyl side group. The protein is Protoheme IX farnesyltransferase of Photobacterium profundum (strain SS9).